The following is a 305-amino-acid chain: Probable DNA-invertase y4cG (305 aa).

Residues 15 to 148 form the Resolvase/invertase-type recombinase catalytic domain; the sequence is RLIGYARVST…SGMQAAKARG (134 aa). Serine 23 acts as the O-(5'-phospho-DNA)-serine intermediate in catalysis.

Belongs to the site-specific recombinase resolvase family.

The sequence is that of Probable DNA-invertase y4cG from Sinorhizobium fredii (strain NBRC 101917 / NGR234).